Consider the following 161-residue polypeptide: MPYTVSSPNQLVYFGSVWADPIALIDLCTVSLGNQFQTQNARTTVQQQFSDLFKTVPTRTIRFSDGENGFRVFRYNSTLDPLITALLNSFDTRNRIIETENPANPNTAEIASATQRVDDATVSIRACINNLMNELARGTGMLNTVSFETISNLTWTTAATT.

This sequence belongs to the virgaviridae capsid protein family.

It localises to the virion. Capsid protein self-assembles to form rod-shaped virions about 18 nm in diameter with a central canal enclosing the viral genomic RNA. The chain is Capsid protein (CP) from Capsicum annuum (Capsicum pepper).